Reading from the N-terminus, the 397-residue chain is FAD-dependent monooxygenase trt8 (397 aa).

Tyr53 is a catalytic residue. FAD-binding residues include Asp145 and Ala158.

The protein belongs to the paxM FAD-dependent monooxygenase family. The cofactor is FAD.

Its pathway is secondary metabolite biosynthesis; terpenoid biosynthesis. FAD-dependent monooxygenase; part of the gene cluster that mediates the biosynthesis of terretonin, a fungal meroterpenoid that acts as a mycotoxin. The first step of the pathway is the synthesis of 3,5-dimethylorsellinic acid (DMOA) by the polyketide synthase trt4. DMOA is then prenylated into farnesyl-DMOA by the polyprenyl transferase trt2. Methylation by the methyltransferase trt5 then leads to farnesyl-DMOA methyl ester which is further subject to epoxidation by the FAD-dependent monooxygenase trt8 to yield epoxyfarnesyl-DMOA methyl ester. Cyclization of epoxyfarnesyl-DMOA methyl ester by the terpene cyclase trt1 leads to a tetracycle intermediate which is in turn converted to preterretonin. Dehydrogenase trt9 comes next to transform preterretonin to preterrenoid. The FAD-dependent monooxygenase trt3 is then required for the C-hydroxylation at C16 of preterrenoid to yield terrenoid. The cytochrome P450 trt6 catalyzes three successive oxidations to transform terrenoid into an unstable intermediate, which then undergoes the D-ring expansion and unusual rearrangement of the methoxy group to afford the core skeleton of terretonin. Trt14 catalyzes the D-ring expansion of terretonin involving intramolecular methoxy rearrangement as well as the hydrolysis of the expanded D-ring and the methyl ester moiety. Finally, the nonheme iron-dependent dioxygenase trt7 accomplishes the last two oxidation reactions steps to complete the biosynthesis of terretonin. Terretonin C is produced via spontaneous decarboxylation of the terretonin precursor. Another shunt product of the terretonin biosynthesis is dihydrofarnesyl-DMOA, derived from epoxyfarnesyl-DMOA through hydrolysis of the epoxide. The chain is FAD-dependent monooxygenase trt8 from Aspergillus terreus (strain NIH 2624 / FGSC A1156).